Reading from the N-terminus, the 368-residue chain is tRNA-specific 2-thiouridylase MnmA (368 aa).

ATP is bound by residues 14 to 21 (AMSGGVDS) and Leu-40. Cys-108 functions as the Nucleophile in the catalytic mechanism. An intrachain disulfide couples Cys-108 to Cys-204. Gly-132 is an ATP binding site. The tract at residues 154–156 (KDQ) is interaction with tRNA. Cys-204 (cysteine persulfide intermediate) is an active-site residue.

Belongs to the MnmA/TRMU family.

It is found in the cytoplasm. The catalysed reaction is S-sulfanyl-L-cysteinyl-[protein] + uridine(34) in tRNA + AH2 + ATP = 2-thiouridine(34) in tRNA + L-cysteinyl-[protein] + A + AMP + diphosphate + H(+). In terms of biological role, catalyzes the 2-thiolation of uridine at the wobble position (U34) of tRNA, leading to the formation of s(2)U34. In Rickettsia canadensis (strain McKiel), this protein is tRNA-specific 2-thiouridylase MnmA.